Here is a 473-residue protein sequence, read N- to C-terminus: Photosystem II CP43 reaction center protein (473 aa).

A propeptide spanning residues 1–14 is cleaved from the precursor; sequence MKTLYSLRRFYPVE. An N-acetylthreonine modification is found at Thr15. Thr15 is subject to Phosphothreonine. 5 consecutive transmembrane segments (helical) span residues 69 to 93, 134 to 155, 178 to 200, 255 to 275, and 291 to 312; these read LFEVAHFVPEKPMYEQGLILLPHLA, LLGPETLEESFPFFGYVWKDRN, KALYFGGVYDTWAPGGGDVRKIT, KPFAWARRALVWSGEAYLSYS, and WFNNTAYPSEFYGPTGPEASQA. Glu367 is a [CaMn4O5] cluster binding site. Residues 426 to 473 constitute a propeptide that is removed on maturation; the sequence is LSTSHFVLGFFLFVGHLWHAGRARAAAAGFEKGIDRDFEPVLSMTPLN. Residues 447 to 471 form a helical membrane-spanning segment; the sequence is RARAAAAGFEKGIDRDFEPVLSMTP.

This sequence belongs to the PsbB/PsbC family. PsbC subfamily. PSII is composed of 1 copy each of membrane proteins PsbA, PsbB, PsbC, PsbD, PsbE, PsbF, PsbH, PsbI, PsbJ, PsbK, PsbL, PsbM, PsbT, PsbX, PsbY, PsbZ, Psb30/Ycf12, at least 3 peripheral proteins of the oxygen-evolving complex and a large number of cofactors. It forms dimeric complexes. Binds multiple chlorophylls and provides some of the ligands for the Ca-4Mn-5O cluster of the oxygen-evolving complex. It may also provide a ligand for a Cl- that is required for oxygen evolution. PSII binds additional chlorophylls, carotenoids and specific lipids. is required as a cofactor. Over time a tryptophan in the fifth lumenal loop is converted to 2-hydroxy-2,3-dihydrotryptophan, 2-oxo-2,3-dihydrotryptophan, and kynurenine by oxidizing species from the active site. This oxidation targets the protein for turnover.

Its subcellular location is the plastid. The protein localises to the chloroplast thylakoid membrane. One of the components of the core complex of photosystem II (PSII). It binds chlorophyll and helps catalyze the primary light-induced photochemical processes of PSII. PSII is a light-driven water:plastoquinone oxidoreductase, using light energy to abstract electrons from H(2)O, generating O(2) and a proton gradient subsequently used for ATP formation. The protein is Photosystem II CP43 reaction center protein of Spinacia oleracea (Spinach).